A 391-amino-acid chain; its full sequence is MLFLLSLKRIFIFRNHKFNIVGDVMGIEEEIRRIEEELKKTPYNKATQKHIGRLKAKLAKLREQAQSRGGGGGGKGYAVKKSGDATAAFVGFPSVGKSTLLNKLTNAKSEVGAYAFTTLTIVPGILEYKGAKIQLLDAPGIIVGASSGKGRGTEVLSAVRSADLILLTVDIYTLDHLPVLEKELYNVGIRLDQTPPDVKIKVKERGGINVSSTVPLTHIDEDTIEAILNEYRIHNADVVIREDITLEQFIDVVAGNRVYIPSLVVVNKIDLADEEYLKYIKQKLEEFGKDYILVSGNKGINLDLLKEKIYEKLGFIKIYLKPQGKKPDFDEPLIMRRGATVKDVCEKLHKDFVRNFRYAQVWGKSAKHPGQRVGLDHKLEDGDILTIVIKR.

The OBG-type G domain maps to alanine 85–glycine 314. GTP-binding positions include glycine 91–serine 98, aspartate 137–isoleucine 141, and asparagine 267–aspartate 270. Residues glycine 314–isoleucine 389 form the TGS domain.

This sequence belongs to the TRAFAC class OBG-HflX-like GTPase superfamily. OBG GTPase family.

This is an uncharacterized protein from Methanocaldococcus jannaschii (strain ATCC 43067 / DSM 2661 / JAL-1 / JCM 10045 / NBRC 100440) (Methanococcus jannaschii).